Reading from the N-terminus, the 403-residue chain is Large ribosomal subunit protein uL3 (403 aa).

Residues 1 to 37 (MSHRKFSAPRHGSLGFLPRKRSSRHRGKVKSFPKDDP) are disordered. Ser-13 is modified (phosphoserine). The segment covering 18 to 31 (PRKRSSRHRGKVKS) has biased composition (basic residues). A Glycyl lysine isopeptide (Lys-Gly) (interchain with G-Cter in SUMO2) cross-link involves residue Lys-39. Lys-136 is modified (N6-acetyllysine). Glycyl lysine isopeptide (Lys-Gly) (interchain with G-Cter in SUMO2) cross-links involve residues Lys-224 and Lys-226. Position 245 is a tele-methylhistidine (His-245). N6-acetyllysine; alternate occurs at positions 286 and 294. A Glycyl lysine isopeptide (Lys-Gly) (interchain with G-Cter in SUMO2); alternate cross-link involves residue Lys-286. Lys-294 participates in a covalent cross-link: Glycyl lysine isopeptide (Lys-Gly) (interchain with G-Cter in SUMO1); alternate. Ser-304 bears the Phosphoserine mark. Lys-366 is modified (N6-acetyllysine; alternate). Residue Lys-366 forms a Glycyl lysine isopeptide (Lys-Gly) (interchain with G-Cter in SUMO2); alternate linkage. At Lys-373 the chain carries N6-acetyllysine. Glycyl lysine isopeptide (Lys-Gly) (interchain with G-Cter in SUMO2) cross-links involve residues Lys-386, Lys-393, and Lys-399.

Belongs to the universal ribosomal protein uL3 family. Component of the large ribosomal subunit. Interacts with DHX33. Post-translationally, constitutively monomethylated at His-245 by METTL18. Methylation at His-245 regulates translation elongation by slowing ribosome traversal on tyrosine codons: slower elongation provides enough time for proper folding of synthesized proteins and prevents cellular aggregation of tyrosine-rich proteins. It is not required for incorporation of RPL3 into ribosomes.

The protein resides in the nucleus. The protein localises to the nucleolus. It is found in the cytoplasm. Its function is as follows. Component of the large ribosomal subunit. The ribosome is a large ribonucleoprotein complex responsible for the synthesis of proteins in the cell. In Oryctolagus cuniculus (Rabbit), this protein is Large ribosomal subunit protein uL3 (RPL3).